The chain runs to 253 residues: MTRYKATIAYDGTDFAGFQSQTNQRTVQEEIEKVLSKLNSFEPVILQGSGRTDSGVHAFGQVIHFDLNGKARDLERLRFGLDTQTPADIAVKKVELVPDDWHARYQKHEKTYEYYLENSVTRSPFHRHSKAYFRYPLNFERMQGAMVKLVGQHDFTGFTASGSSVDDKVRTIYQAEIIQLDKENFKFIFRGNGFLYKQVRNMVGTVIKIGNDRMPVSQIDKILTSKNRNFAGPTAAPEGLYLKEVKYEPINEI.

The active-site Nucleophile is the Asp53. Tyr112 provides a ligand contact to substrate.

This sequence belongs to the tRNA pseudouridine synthase TruA family. Homodimer.

The catalysed reaction is uridine(38/39/40) in tRNA = pseudouridine(38/39/40) in tRNA. Formation of pseudouridine at positions 38, 39 and 40 in the anticodon stem and loop of transfer RNAs. The protein is tRNA pseudouridine synthase A of Lactococcus lactis subsp. cremoris (strain MG1363).